A 362-amino-acid polypeptide reads, in one-letter code: Phosphoserine aminotransferase (362 aa).

L-glutamate is bound at residue arginine 42. Pyridoxal 5'-phosphate contacts are provided by residues 76–77, tryptophan 102, threonine 152, aspartate 172, and glutamine 195; that span reads AR. Residue lysine 196 is modified to N6-(pyridoxal phosphate)lysine. A pyridoxal 5'-phosphate-binding site is contributed by 237–238; the sequence is NT.

The protein belongs to the class-V pyridoxal-phosphate-dependent aminotransferase family. SerC subfamily. As to quaternary structure, homodimer. The cofactor is pyridoxal 5'-phosphate.

The protein resides in the cytoplasm. It catalyses the reaction O-phospho-L-serine + 2-oxoglutarate = 3-phosphooxypyruvate + L-glutamate. It carries out the reaction 4-(phosphooxy)-L-threonine + 2-oxoglutarate = (R)-3-hydroxy-2-oxo-4-phosphooxybutanoate + L-glutamate. It functions in the pathway amino-acid biosynthesis; L-serine biosynthesis; L-serine from 3-phospho-D-glycerate: step 2/3. Its pathway is cofactor biosynthesis; pyridoxine 5'-phosphate biosynthesis; pyridoxine 5'-phosphate from D-erythrose 4-phosphate: step 3/5. Its function is as follows. Catalyzes the reversible conversion of 3-phosphohydroxypyruvate to phosphoserine and of 3-hydroxy-2-oxo-4-phosphonooxybutanoate to phosphohydroxythreonine. This chain is Phosphoserine aminotransferase, found in Haemophilus influenzae (strain ATCC 51907 / DSM 11121 / KW20 / Rd).